A 487-amino-acid polypeptide reads, in one-letter code: Catalase (487 aa).

The disordered stretch occupies residues 1–20 (MSQRVLTTESGAPVADNQNS). Catalysis depends on residues His54 and Asn127. Tyr337 is a binding site for heme.

Belongs to the catalase family. Requires heme as cofactor.

It catalyses the reaction 2 H2O2 = O2 + 2 H2O. In terms of biological role, decomposes hydrogen peroxide into water and oxygen; serves to protect cells from the toxic effects of hydrogen peroxide. In Streptomyces coelicolor (strain ATCC BAA-471 / A3(2) / M145), this protein is Catalase (katA).